We begin with the raw amino-acid sequence, 514 residues long: 2-isopropylmalate synthase (514 aa).

The Pyruvate carboxyltransferase domain occupies 5–268 (LIIFDTTLRD…DVGIDTTQIV (264 aa)). Residues Asp-14, His-202, His-204, and Asn-239 each contribute to the Mn(2+) site. Residues 395–514 (KFVSLSQRSE…KDDKLNPQRA (120 aa)) are regulatory domain.

The protein belongs to the alpha-IPM synthase/homocitrate synthase family. LeuA type 1 subfamily. In terms of assembly, homodimer. It depends on Mn(2+) as a cofactor.

It is found in the cytoplasm. The enzyme catalyses 3-methyl-2-oxobutanoate + acetyl-CoA + H2O = (2S)-2-isopropylmalate + CoA + H(+). It participates in amino-acid biosynthesis; L-leucine biosynthesis; L-leucine from 3-methyl-2-oxobutanoate: step 1/4. In terms of biological role, catalyzes the condensation of the acetyl group of acetyl-CoA with 3-methyl-2-oxobutanoate (2-ketoisovalerate) to form 3-carboxy-3-hydroxy-4-methylpentanoate (2-isopropylmalate). The polypeptide is 2-isopropylmalate synthase (Burkholderia cenocepacia (strain HI2424)).